The primary structure comprises 177 residues: Large ribosomal subunit protein uL6 (177 aa).

It belongs to the universal ribosomal protein uL6 family. In terms of assembly, part of the 50S ribosomal subunit.

Its function is as follows. This protein binds to the 23S rRNA, and is important in its secondary structure. It is located near the subunit interface in the base of the L7/L12 stalk, and near the tRNA binding site of the peptidyltransferase center. The protein is Large ribosomal subunit protein uL6 of Salmonella arizonae (strain ATCC BAA-731 / CDC346-86 / RSK2980).